The primary structure comprises 212 residues: MAIGLIGRKVGMTRIFTEDGVSIPVTVIEVAGNRVTQVKTLETDGYRALQVTTGTKKANRITKPEAGHFAKSGVEAGRGLWEMRLVDGEGEGIEVGAELNVDIFADVAKVDVTGQSKGKGFQGGVKRWNFRTQDMTHGNSLSHRSNGSIGQNQTPGRVFKGKKMSGHMGAERVTTQNLVVVRVDVERNLLLVRGAVPGATNGDLIIKPAVKA.

The disordered stretch occupies residues 136–155 (THGNSLSHRSNGSIGQNQTP). N5-methylglutamine is present on Gln-153.

Belongs to the universal ribosomal protein uL3 family. In terms of assembly, part of the 50S ribosomal subunit. Forms a cluster with proteins L14 and L19. In terms of processing, methylated by PrmB.

One of the primary rRNA binding proteins, it binds directly near the 3'-end of the 23S rRNA, where it nucleates assembly of the 50S subunit. The polypeptide is Large ribosomal subunit protein uL3 (Shewanella baltica (strain OS223)).